The sequence spans 461 residues: V-type ATP synthase beta chain (461 aa).

Belongs to the ATPase alpha/beta chains family.

In terms of biological role, produces ATP from ADP in the presence of a proton gradient across the membrane. The V-type beta chain is a regulatory subunit. This chain is V-type ATP synthase beta chain, found in Clostridium botulinum (strain Kyoto / Type A2).